A 490-amino-acid chain; its full sequence is Bifunctional protein HldE (490 aa).

The tract at residues 1 to 328 is ribokinase; it reads MFSFDALLQA…LRRRILPHAS (328 aa). ATP is bound at residue 205-208; it reads NRKE. Asp-275 is an active-site residue. A cytidylyltransferase region spans residues 358 to 490; that stretch reads FTNGCFDILH…LVARAREGQS (133 aa).

This sequence in the N-terminal section; belongs to the carbohydrate kinase PfkB family. In the C-terminal section; belongs to the cytidylyltransferase family. In terms of assembly, homodimer.

The enzyme catalyses D-glycero-beta-D-manno-heptose 7-phosphate + ATP = D-glycero-beta-D-manno-heptose 1,7-bisphosphate + ADP + H(+). The catalysed reaction is D-glycero-beta-D-manno-heptose 1-phosphate + ATP + H(+) = ADP-D-glycero-beta-D-manno-heptose + diphosphate. It functions in the pathway nucleotide-sugar biosynthesis; ADP-L-glycero-beta-D-manno-heptose biosynthesis; ADP-L-glycero-beta-D-manno-heptose from D-glycero-beta-D-manno-heptose 7-phosphate: step 1/4. Its pathway is nucleotide-sugar biosynthesis; ADP-L-glycero-beta-D-manno-heptose biosynthesis; ADP-L-glycero-beta-D-manno-heptose from D-glycero-beta-D-manno-heptose 7-phosphate: step 3/4. Catalyzes the phosphorylation of D-glycero-D-manno-heptose 7-phosphate at the C-1 position to selectively form D-glycero-beta-D-manno-heptose-1,7-bisphosphate. In terms of biological role, catalyzes the ADP transfer from ATP to D-glycero-beta-D-manno-heptose 1-phosphate, yielding ADP-D-glycero-beta-D-manno-heptose. In Rhodopseudomonas palustris (strain TIE-1), this protein is Bifunctional protein HldE.